The sequence spans 1160 residues: Nonribosomal peptide synthetase fmqC (1160 aa).

Residues 132–520 (TYRELNDRSS…LGEVEHALQQ (389 aa)) are adenylation. The Carrier domain occupies 642–719 (QPVTQLEESL…EMAGMLDGVT (78 aa)). O-(pantetheine 4'-phosphoryl)serine is present on serine 679. The condensation stretch occupies residues 749 to 1025 (CTLEDLQEGF…CAAAETPMRI (277 aa)).

This sequence belongs to the NRP synthetase family. As to quaternary structure, interacts with the mitogen-activated protein kinase mpkA. Phosphorylated by mpkA during conidiogenesis.

It localises to the cytoplasm. It participates in alkaloid biosynthesis. Functionally, nonribosomal peptide synthetase; part of the gene cluster that mediates the biosynthesis of the antitumor fumiquinazolines that confer a dual-usage capability to defend against phagocytes in the environment and animal hosts. The simplest member is fumiquinazoline F (FQF) with a 6-6-6 tricyclic core derived from anthranilic acid (Ant), tryptophan (Trp), and alanine (Ala). The trimodular NRPS fmqA is responsible for FQF formation. Modules 1, 2 and 3 of fmqA are predicted to activate and load Ant, Trp and Ala, respectively, providing for the assembly of an Ant-Trp-Ala-S-enzyme intermediate that would undergo double cyclization for chain release and generation of the tricyclic 6-6-6 product fumiquinazoline F. The presence of an E domain predicted for module 2 of fmqA is consistent with epimerization of L-Trp to D-Trp during assembly to generate the R-stereocenter at C14 of FQF. The FAD-dependent monooxygenase fmqB and the monomodular NRPS fmqC then maturate FQF to FQA. FmqB oxidizes the 2',3'-double bond of the indole side chain of FQF, and fmqC activates L-Ala as the adenylate, installs it as the pantetheinyl thioester on its carrier protein domain, and acylates the oxidized indole for subsequent intramolecular cyclization to create the 6-5-5-imidazolindolone of FQA. The FAD-linked oxidoreductase fmqD introduces a third layer of scaffold complexity by converting FQA to the spirohemiaminal FQC, presumably by catalyzing the formation of a transient imine within the pyrazinone ring. FQC subsequently converts nonenzymatically to the known cyclic aminal FQD. The chain is Nonribosomal peptide synthetase fmqC from Aspergillus fumigatus (strain ATCC MYA-4609 / CBS 101355 / FGSC A1100 / Af293) (Neosartorya fumigata).